The chain runs to 375 residues: MAGSQIKIPLPKPPDSDSQRLNAFPVIMAQEGKGRLLRQIRLRKILSGDPSDQQITFVNTYGFIRATPETSEFISESSQQKVTPVVTACMLSFGAGPVLEDPQHMLKALDQTDIRVRKTASDKEQILFEINRIPNLFRHYQISADHLIQASSDKYVKSPAKLIAGVNYIYCVTFLSVTVCSASLKFRVARPLLAARSRLVRAVQMEILLRVTCKKDSQMAKSMLNDPDGEGCIASVWFHLCNLCKGRNKLRSYDENYFASKCRKMNLTVSIGDMWGPTILVHAGGHIPTTAKPFFNSRGWVCHPIHQSSPSLAKTLWSSGCEIKAASAILQGSDYASLAKTDDIIYSKIKVDKDAANYKGVSWSPFRKSASMRNL.

It belongs to the morbillivirus/respirovirus/rubulavirus M protein family.

It is found in the virion. In terms of biological role, the M protein has a crucial role in virus assembly and interacts with the RNP complex as well as with the viral membrane. The protein is Matrix protein (M) of Mumps virus genotype A (strain Jeryl-Lynn) (MuV).